The chain runs to 404 residues: 11-beta-hydroxysteroid dehydrogenase type 2 (404 aa).

82-111 serves as a coordination point for NAD(+); that stretch reads TRAVLITGCDSGFGNATAKKLDTMGFTVLA. Ser219 contacts substrate. Tyr232 (proton acceptor) is an active-site residue. The segment at 383-404 is disordered; that stretch reads LTSARDIAQDQGPRPDPSPTAQ.

This sequence belongs to the short-chain dehydrogenases/reductases (SDR) family. As to quaternary structure, interacts with ligand-free cytoplasmic NR3C2. Highly expressed in kidney, adrenal and colon; detected at lower levels on lung, liver, and spleen. Expressed in oocytes. Expressed in uterine tissues and in corpora lutea.

The protein localises to the microsome. Its subcellular location is the endoplasmic reticulum. It catalyses the reaction an 11beta-hydroxysteroid + NAD(+) = an 11-oxosteroid + NADH + H(+). The enzyme catalyses corticosterone + NAD(+) = 11-dehydrocorticosterone + NADH + H(+). It carries out the reaction cortisol + NAD(+) = cortisone + NADH + H(+). The catalysed reaction is 11beta,17beta-dihydroxyandrost-4-ene-3-one + NAD(+) = 17beta-hydroxyandrost-4-ene-3,11-dione + NADH + H(+). It catalyses the reaction 11beta-hydroxyandrost-4-ene-3,17-dione + NAD(+) = androst-4-ene-3,11,17-trione + NADH + H(+). The protein operates within steroid metabolism. Its activity is regulated as follows. Inhibited by glycyrrhetinic acid, carbenoloxone, 11-alpha-OH-progesterone and 11-beta-OH-progesterone. Catalyzes the conversion of biologically active 11beta-hydroxyglucocorticoids (11beta-hydroxysteroid) such as cortisol, to inactive 11-ketoglucocorticoids (11-oxosteroid) such as cortisone, in the presence of NAD(+). Functions as a dehydrogenase (oxidase), thereby decreasing the concentration of active glucocorticoids, thus protecting the nonselective mineralocorticoid receptor from occupation by glucocorticoids. Affinity towards corticosterone is higher than cortisol or dexamethasone. Plays an important role in maintaining glucocorticoids balance during preimplantation and protects the fetus from excessive maternal corticosterone exposure. Catalyzes the oxidation of 11beta-hydroxytestosterone (11beta,17beta-dihydroxyandrost-4-ene-3-one) to 11-ketotestosterone (17beta-hydroxyandrost-4-ene-3,11-dione), a major bioactive androgen. Catalyzes the conversion of 11beta-hydroxyandrostenedione (11beta-hydroxyandrost-4-ene-3,17-dione) to 11-ketoandrostenedione (androst-4-ene-3,11,17-trione), which can be further metabolized to 11-ketotestosterone. Converts 7-beta-25-dihydroxycholesterol to 7-oxo-25-hydroxycholesterol in vitro. 7-beta-25-dihydroxycholesterol (not 7-oxo-25-hydroxycholesterol) acts as ligand for the G-protein-coupled receptor (GPCR) Epstein-Barr virus-induced gene 2 (EBI2) and may thereby regulate immune cell migration. May protect ovulating oocytes and fertilizing spermatozoa from the adverse effects of cortisol. This chain is 11-beta-hydroxysteroid dehydrogenase type 2 (HSD11B2), found in Bos taurus (Bovine).